We begin with the raw amino-acid sequence, 75 residues long: Peptide Ctri10033 (75 aa).

The N-terminal stretch at 1 to 22 (MNSKYLFVFLILIVTFTDLCQG) is a signal peptide. Position 43 is an arginine amide (Arg-43). Positions 47–75 (ELGSQYDYLQDFRKRELDLDDLLSKFPDY) are excised as a propeptide.

This sequence belongs to the non-disulfide-bridged peptide (NDBP) superfamily. Short antimicrobial peptide (group 4) family. Expressed by the venom gland.

The protein localises to the secreted. This chain is Peptide Ctri10033, found in Chaerilus tricostatus (Scorpion).